Consider the following 167-residue polypeptide: Ribonuclease P protein subunit p20 (167 aa).

Positions 1–36 (MMGSNYPEHGTKPRSAKYHKQQNHRVVRKQPPRPAV) are disordered. Residues 12–31 (KPRSAKYHKQQNHRVVRKQP) are compositionally biased toward basic residues.

Interacts with Smn.

The protein resides in the nucleus. The protein localises to the nucleolus. It localises to the cytoplasm. It is found in the cytoplasmic granule. In terms of biological role, component of ribonuclease P, a protein complex that generates mature tRNA molecules by cleaving their 5'-ends. Also a component of RNase MRP complex, which cleaves pre-rRNA sequences. In Drosophila melanogaster (Fruit fly), this protein is Ribonuclease P protein subunit p20.